The following is an 81-amino-acid chain: Acyl carrier protein (81 aa).

The 76-residue stretch at 4-79 (SEIFGKVKDI…AAVDFIAGKV (76 aa)) folds into the Carrier domain. S39 carries the post-translational modification O-(pantetheine 4'-phosphoryl)serine.

The protein belongs to the acyl carrier protein (ACP) family. 4'-phosphopantetheine is transferred from CoA to a specific serine of apo-ACP by AcpS. This modification is essential for activity because fatty acids are bound in thioester linkage to the sulfhydryl of the prosthetic group.

The protein resides in the cytoplasm. It participates in lipid metabolism; fatty acid biosynthesis. Its function is as follows. Carrier of the growing fatty acid chain in fatty acid biosynthesis. The protein is Acyl carrier protein of Acaryochloris marina (strain MBIC 11017).